The sequence spans 501 residues: Ell-associated factor Eaf (501 aa).

2 stretches are compositionally biased toward polar residues: residues 138–149 (NMGQGQLHSQGA) and 173–192 (ENSTMRISTKTKVSTGSRRN). Disordered stretches follow at residues 138–226 (NMGQ…PAWD) and 256–501 (GHAN…DDDD). Low complexity-rich tracts occupy residues 200-221 (RNSPMQQSSPSRPVPVHRSPQS) and 256-270 (GHANTSGSSTGSATG). S202 carries the phosphoserine modification. Residues 271-283 (QTDFGSISSSSHI) show a composition bias toward polar residues. Low complexity-rich tracts occupy residues 302 to 314 (QRQSPPMAQQQQP) and 329 to 343 (QQQRQRNSPQQQRPP). Residues 393–408 (DSSDSDSGSDSDDSTE) show a composition bias toward acidic residues. 3 stretches are compositionally biased toward low complexity: residues 416-437 (QQPVYQNQNHQQQQMAQQHLNQ), 455-471 (QQQQQQMVPHQQQQKQQ), and 483-501 (NDLLQNDLQLSSNSSDDDD).

It belongs to the EAF family.

The protein localises to the nucleus. In terms of biological role, promotes transcriptional elongation by Su(Tpl)/ELL. Essential for development. The polypeptide is Ell-associated factor Eaf (Drosophila yakuba (Fruit fly)).